The sequence spans 85 residues: Large ribosomal subunit protein bL31 (85 aa).

Residues 65–85 (YGMGGAGKAGEDKKAGDKADA) are disordered. A compositionally biased stretch (basic and acidic residues) spans 73–85 (AGEDKKAGDKADA).

It belongs to the bacterial ribosomal protein bL31 family. Type A subfamily. As to quaternary structure, part of the 50S ribosomal subunit.

In terms of biological role, binds the 23S rRNA. The sequence is that of Large ribosomal subunit protein bL31 from Synechococcus sp. (strain WH7803).